The sequence spans 156 residues: Endogenous retrovirus group K member 9 Pro protein (156 aa).

Residues 21–96 enclose the Peptidase A2 domain; sequence FEGLVDTGAD…IPLNLWGRDL (76 aa). Residue D26 is part of the active site. Residues 111-156 form the G-patch domain; it reads YSPTSQKIMTKRGYIPGKGLGKNEDGIKIPFEAKINQKREGIGYPF.

The protein belongs to the peptidase A2 family. HERV class-II K(HML-2) subfamily. As to quaternary structure, active as a homodimer. Autoproteolytically processed at the N-terminus. Expected C-terminal autoprocessing not detected. The sequence shown is that of the processed Pro protein.

The catalysed reaction is Processing at the authentic HIV-1 PR recognition site and release of the mature p17 matrix and the p24 capsid protein, as a result of the cleavage of the -SQNY-|-PIVQ- cleavage site.. In terms of biological role, retroviral proteases have roles in the processing of the primary translation products and the maturation of the viral particle. Endogenous Pro proteins may have kept, lost or modified their original function during evolution. In Homo sapiens (Human), this protein is Endogenous retrovirus group K member 9 Pro protein (ERVK-9).